A 218-amino-acid polypeptide reads, in one-letter code: Small ribosomal subunit protein uS7m (218 aa).

The transit peptide at Met1–Leu19 directs the protein to the mitochondrion.

It belongs to the universal ribosomal protein uS7 family. Component of the mitochondrial ribosome small subunit (28S) which comprises a 12S rRNA and about 30 distinct proteins.

It is found in the mitochondrion. This Drosophila melanogaster (Fruit fly) protein is Small ribosomal subunit protein uS7m (mRpS7).